We begin with the raw amino-acid sequence, 94 residues long: Cell division protein FtsB (94 aa).

The Cytoplasmic segment spans residues 1–3 (MRA). Residues 4-21 (FAVLLIIALGWLQYTLWF) form a helical membrane-spanning segment. Residues 22-94 (GKNGMEDYAQ…YRIIDENSEE (73 aa)) are Periplasmic-facing. Positions 40 to 60 (EEVNQGLRNRNGQMFAEIDDL) form a coiled coil.

It belongs to the FtsB family. In terms of assembly, part of a complex composed of FtsB, FtsL and FtsQ.

The protein localises to the cell inner membrane. Essential cell division protein. May link together the upstream cell division proteins, which are predominantly cytoplasmic, with the downstream cell division proteins, which are predominantly periplasmic. The sequence is that of Cell division protein FtsB from Aliivibrio salmonicida (strain LFI1238) (Vibrio salmonicida (strain LFI1238)).